A 430-amino-acid chain; its full sequence is Adenylosuccinate synthetase (430 aa).

Residues G12–K18 and G40–T42 each bind GTP. The active-site Proton acceptor is the D13. The Mg(2+) site is built by D13 and G40. IMP is bound by residues D13–K16, N38–H41, T130, R144, Q224, T239, and R303. The active-site Proton donor is the H41. T299–R305 serves as a coordination point for substrate. GTP-binding positions include R305, K331–D333, and S413–S415.

This sequence belongs to the adenylosuccinate synthetase family. As to quaternary structure, homodimer. It depends on Mg(2+) as a cofactor.

It localises to the cytoplasm. It carries out the reaction IMP + L-aspartate + GTP = N(6)-(1,2-dicarboxyethyl)-AMP + GDP + phosphate + 2 H(+). Its pathway is purine metabolism; AMP biosynthesis via de novo pathway; AMP from IMP: step 1/2. Plays an important role in the de novo pathway of purine nucleotide biosynthesis. Catalyzes the first committed step in the biosynthesis of AMP from IMP. The chain is Adenylosuccinate synthetase from Methylorubrum extorquens (strain CM4 / NCIMB 13688) (Methylobacterium extorquens).